Consider the following 544-residue polypeptide: Terpene synthase 9 (544 aa).

Residues aspartate 296, aspartate 300, and glutamate 449 each coordinate Mg(2+). The DDXXD motif motif lies at 296-300; that stretch reads DDTFD.

The protein belongs to the terpene synthase family. Tpsa subfamily. Mg(2+) serves as cofactor. Mn(2+) is required as a cofactor.

The enzyme catalyses (2E,6E)-farnesyl diphosphate = (1E,4E)-germacrene B + diphosphate. It catalyses the reaction (2E)-geranyl diphosphate = terpinolene + diphosphate. It carries out the reaction (2E)-geranyl diphosphate = limonene + diphosphate. The catalysed reaction is (2E)-geranyl diphosphate = beta-myrcene + diphosphate. The enzyme catalyses (2Z,6Z)-farnesyl diphosphate = germacrene A + diphosphate. It catalyses the reaction (2Z,6Z)-farnesyl diphosphate = alpha-humulene + diphosphate. The protein operates within secondary metabolite biosynthesis; terpenoid biosynthesis. Its function is as follows. Sesquiterpene synthase involved in the biosynthesis of volatile compounds. Mediates the conversion of (2E,6E)-farnesyl diphosphate (FPP) into (1E,4E)-germacrene B, but also smaller amounts of germacrene A and C, and of (2Z,6Z)-farnesyl diphosphate ((ZZ)-FPP) into alpha-humulene, germacrene A and germacrene B. Can act with a low efficiency as a monoterpene synthase with geranyl diphosphate (GPP) as substrate, thus producing beta-myrcene, limonene and terpinolene. The protein is Terpene synthase 9 of Solanum habrochaites (Wild tomato).